The sequence spans 1438 residues: DNA polymerase III PolC-type (1438 aa).

The 157-residue stretch at 422–578 (YVVFDVETTG…YDTEATAYMF (157 aa)) folds into the Exonuclease domain.

Belongs to the DNA polymerase type-C family. PolC subfamily.

It localises to the cytoplasm. It catalyses the reaction DNA(n) + a 2'-deoxyribonucleoside 5'-triphosphate = DNA(n+1) + diphosphate. Its function is as follows. Required for replicative DNA synthesis. This DNA polymerase also exhibits 3' to 5' exonuclease activity. In Staphylococcus saprophyticus subsp. saprophyticus (strain ATCC 15305 / DSM 20229 / NCIMB 8711 / NCTC 7292 / S-41), this protein is DNA polymerase III PolC-type.